A 198-amino-acid polypeptide reads, in one-letter code: MFYLLAGLGNPGKKYELSRHNAGFMIVDAIASEFYFPSFRERHNALISIGNIKSHRVILVKPWTFMNNSGAPIMSIASLYKIPLDNIIIFHDEVEINFCTIRVKKSGGNAGHNGLKSIDNLLGKDYWRVRFGIGRPINKTNLKIDLSYYVLSQFHNIKAVNNTILNIVEHITLLLEKKPSMFMEKVKNLIKYEDIPTE.

Y15 lines the tRNA pocket. H20 serves as the catalytic Proton acceptor. F65, N67, and N113 together coordinate tRNA.

Belongs to the PTH family. As to quaternary structure, monomer.

It is found in the cytoplasm. It catalyses the reaction an N-acyl-L-alpha-aminoacyl-tRNA + H2O = an N-acyl-L-amino acid + a tRNA + H(+). Hydrolyzes ribosome-free peptidyl-tRNAs (with 1 or more amino acids incorporated), which drop off the ribosome during protein synthesis, or as a result of ribosome stalling. Its function is as follows. Catalyzes the release of premature peptidyl moieties from peptidyl-tRNA molecules trapped in stalled 50S ribosomal subunits, and thus maintains levels of free tRNAs and 50S ribosomes. The chain is Peptidyl-tRNA hydrolase from Ehrlichia chaffeensis (strain ATCC CRL-10679 / Arkansas).